The primary structure comprises 158 residues: Small ribosomal subunit protein uS9 (158 aa).

The protein belongs to the universal ribosomal protein uS9 family.

The polypeptide is Small ribosomal subunit protein uS9 (Brucella canis (strain ATCC 23365 / NCTC 10854 / RM-666)).